Consider the following 208-residue polypeptide: ATP-dependent Clp protease proteolytic subunit (208 aa).

Serine 98 serves as the catalytic Nucleophile. Residue histidine 123 is part of the active site.

The protein belongs to the peptidase S14 family. Fourteen ClpP subunits assemble into 2 heptameric rings which stack back to back to give a disk-like structure with a central cavity, resembling the structure of eukaryotic proteasomes.

It localises to the cytoplasm. The catalysed reaction is Hydrolysis of proteins to small peptides in the presence of ATP and magnesium. alpha-casein is the usual test substrate. In the absence of ATP, only oligopeptides shorter than five residues are hydrolyzed (such as succinyl-Leu-Tyr-|-NHMec, and Leu-Tyr-Leu-|-Tyr-Trp, in which cleavage of the -Tyr-|-Leu- and -Tyr-|-Trp bonds also occurs).. Cleaves peptides in various proteins in a process that requires ATP hydrolysis. Has a chymotrypsin-like activity. Plays a major role in the degradation of misfolded proteins. This chain is ATP-dependent Clp protease proteolytic subunit, found in Wolbachia sp. subsp. Drosophila simulans (strain wRi).